A 572-amino-acid polypeptide reads, in one-letter code: [Pyruvate dehydrogenase [acetyl-transferring]]-phosphatase 1, mitochondrial (572 aa).

The interval 95–122 (NTSGNINMPSPNPKGTETQKSQRSQNDQ) is disordered. The 391-residue stretch at 153–543 (RYDVAQLPSN…DDLTVTVAFF (391 aa)) folds into the PPM-type phosphatase domain. The Mn(2+) site is built by aspartate 197, glycine 198, aspartate 424, and aspartate 480. The segment covering 470 to 480 (EAQRPAFRYKD) has biased composition (basic and acidic residues). The disordered stretch occupies residues 470–492 (EAQRPAFRYKDNNSSSPSGSNPE). The segment covering 481-491 (NNSSSPSGSNP) has biased composition (low complexity).

Belongs to the PP2C family. Requires Mg(2+) as cofactor. The cofactor is Mn(2+). Processed by mitochondrial inner membrane protease (IMP) complex and released to the intermembrane space.

The protein resides in the mitochondrion intermembrane space. It catalyses the reaction O-phospho-L-seryl-[pyruvate dehydrogenase E1 alpha subunit] + H2O = L-seryl-[pyruvate dehydrogenase E1 alpha subunit] + phosphate. In terms of biological role, catalyzes the dephosphorylation and concomitant reactivation of the E1 alpha subunit (PDA1) of the pyruvate dehydrogenase complex. In Saccharomyces cerevisiae (strain ATCC 204508 / S288c) (Baker's yeast), this protein is [Pyruvate dehydrogenase [acetyl-transferring]]-phosphatase 1, mitochondrial (PTC5).